Here is a 231-residue protein sequence, read N- to C-terminus: Claudin-10 (231 aa).

A helical membrane pass occupies residues 1-21 (MASTASEIIAFMVSISGWVLV). The Extracellular segment spans residues 22-80 (SSTLPTDYWKVSTIDGTVITTATYWANLWKTCVTDSTGVSNCKDFPSMLALDGYIQACR). Residues 81 to 101 (GLMIAAVSLGFFGSIFALIGM) form a helical membrane-spanning segment. Residues 102–115 (KCTKVGGSDKAKAK) lie on the Cytoplasmic side of the membrane. Residues 116 to 136 (IACLAGIVFILSGLCSMTGCS) traverse the membrane as a helical segment. Topologically, residues 137–160 (LYANKITTEFFDPLFVEQKYELGA) are extracellular. A helical transmembrane segment spans residues 161–181 (ALFIGWAGASLCLIGGVIFCF). At 182–231 (SISDNNKAPRMGYTYNGATSVMSSRTKYHGREGDLKTPNPSKQFDKNAYV) the chain is on the cytoplasmic side.

It belongs to the claudin family. Can form homodimers both in trans (interaction between CLDN10 molecules in opposing membranes) and in cis (interaction between CLDN10 molecules within one membrane). Interacts with CLDN19.

Its subcellular location is the cell junction. The protein resides in the tight junction. It is found in the cell membrane. The catalysed reaction is Na(+)(in) = Na(+)(out). It catalyses the reaction Li(+)(in) = Li(+)(out). It carries out the reaction K(+)(in) = K(+)(out). The enzyme catalyses Rb(+)(in) = Rb(+)(out). The catalysed reaction is Cs(+)(in) = Cs(+)(out). It catalyses the reaction NH4(+)(in) = NH4(+)(out). It carries out the reaction methylamine(out) = methylamine(in). The enzyme catalyses Mg(2+)(in) = Mg(2+)(out). The catalysed reaction is Ca(2+)(in) = Ca(2+)(out). It catalyses the reaction Sr(2+)(in) = Sr(2+)(out). It carries out the reaction chloride(in) = chloride(out). The enzyme catalyses nitrate(in) = nitrate(out). Forms paracellular channels: polymerizes in tight junction strands with cation- and anion-selective channels through the strands, conveying epithelial permeability in a process known as paracellular tight junction permeability. In sweat glands and in the thick ascending limb (TAL) of Henle's loop in kidney, it controls paracellular sodium permeability which is essential for proper sweat production and renal function. In renal proximal tubules, it conveys selective chloride over hydrogencarbonate anion permeability which is required for renal chloride reabsorption and salt homeostasis. In Bos taurus (Bovine), this protein is Claudin-10 (CLDN10).